Here is a 1178-residue protein sequence, read N- to C-terminus: MFELNNFDAIQIGLASPEQIRQWSRGEVKKPETINYRTLKPERDGLFCERIFGPMKDWECHCGKYKRVRYKGIVCDRCGVEVTKAKVRRERMGHIELAAPVSHIWYFKGIPSRMGLILDMSPRALEKVLYFASYIVIDPKETPLLKKQLLNEKEYREAVDKYGDESFVAGMGAEAIQDLLNEIDLVTSSKELKEELKQSSGQKKVRIIRRLEVVESFRKSGNDPQWMVINVIPVIPPDLRPMVQLDGGRFATSDLNDLYRRVINRNNRLKKLLDLGAPDIIVRNEKRMLQEAVDALIDNGRRGRPVTGPGNRPLKSLSDMLKGKQGRFRQNLLGKRVDYSGRSVIVVGPELKMYQCGLPKEMAIELFKPFVMKKLVQDGIAHNIKSAKRMVERVLPQVWDVLEEVIADHPVLLNRAPTLHRLGIQAFQPVLVEGRAIKLHPLACTAYNADFDGDQMAVHLPLSVEAQAEARFLMLAATNILKPSDGKPVCVPTQDMILGSYYLTMDKNGAKGDGMTFSSKDEAIMAYEVKEIDIHAQINVRMFREVDGELKSKIIKTTVGKIIFNESIPQNLGLVNRENEEESFNLEVDFLATKKSLGKIIDQCYMKHGPVKTSIMLDNIKALGYHYSSIGAVTVASSDIIVPKVKYDLLKEADETIEKIEKMYKRGFISDEERYERVIEKWTQTTEDVANALMDSLDKFNPIYMMADSGARGSKSQIKQLAGMRGLMASPSGKIIELPIRASFKEGLDVIEYFLSTHGARKGNADTALKTADSGYLTRRLVDVSQDVIVREEDCGTDEGIFVSEIKEGNEVIEELRERLIGRYTAEDIVDPETGDVLHPKNEYMDPYAADKIVSAGIKKVKIRSVFTCKCKVGVCARCYGMNMATAKKIDIGEAVGIIAAQSIGEPGTQLTMRTFHTGGVAGADITQGLPRVEELFEARKPKGLAIVSEIAGTARIEETKKKRTVIVMGADGEERSYDIPFGSRLRVNESDYVEAGDEITEGSVNPHDIMSIKGIDGARRYLLSEVQKVYRLQGVDINDKHLEVVVRQMTRKIKIVDSGDTDLLPGTMIDMFDFYEENARVREFGGEEAKGEQTLLGITKAALATDSFLSAASFQETTRVLTEAAIKGKVDPLVGLKENVIIGKLIPAGTGMMRYRSLKVETDSELVEETIGETVEE.

Residues C60, C62, C75, and C78 each coordinate Zn(2+). Mg(2+)-binding residues include D450, D452, and D454. Zn(2+)-binding residues include C795, C869, C876, and C879.

The protein belongs to the RNA polymerase beta' chain family. The RNAP catalytic core consists of 2 alpha, 1 beta, 1 beta' and 1 omega subunit. When a sigma factor is associated with the core the holoenzyme is formed, which can initiate transcription. It depends on Mg(2+) as a cofactor. The cofactor is Zn(2+).

It carries out the reaction RNA(n) + a ribonucleoside 5'-triphosphate = RNA(n+1) + diphosphate. In terms of biological role, DNA-dependent RNA polymerase catalyzes the transcription of DNA into RNA using the four ribonucleoside triphosphates as substrates. This chain is DNA-directed RNA polymerase subunit beta', found in Clostridium beijerinckii (strain ATCC 51743 / NCIMB 8052) (Clostridium acetobutylicum).